The chain runs to 90 residues: Small ribosomal subunit protein uS15 (90 aa).

The protein belongs to the universal ribosomal protein uS15 family. In terms of assembly, part of the 30S ribosomal subunit. Forms a bridge to the 50S subunit in the 70S ribosome, contacting the 23S rRNA.

Functionally, one of the primary rRNA binding proteins, it binds directly to 16S rRNA where it helps nucleate assembly of the platform of the 30S subunit by binding and bridging several RNA helices of the 16S rRNA. In terms of biological role, forms an intersubunit bridge (bridge B4) with the 23S rRNA of the 50S subunit in the ribosome. The chain is Small ribosomal subunit protein uS15 from Thermotoga maritima (strain ATCC 43589 / DSM 3109 / JCM 10099 / NBRC 100826 / MSB8).